The sequence spans 569 residues: Vacuolar protein sorting-associated protein 53 B (569 aa).

Coiled coils occupy residues 53–90 (TRAK…VQDI), 125–145 (QVMT…AINE), and 295–316 (KEKS…FERE).

Belongs to the VPS53 family. In terms of assembly, component of the Golgi-associated retrograde protein (GARP) complex.

The protein resides in the cytoplasm. The protein localises to the golgi apparatus. Its subcellular location is the trans-Golgi network membrane. It is found in the endosome membrane. Functionally, involved in retrograde transport from early and late endosomes to late Golgi, leading to the membrane fusion between late Golgi and endosomal vesicles. In Arabidopsis thaliana (Mouse-ear cress), this protein is Vacuolar protein sorting-associated protein 53 B.